The primary structure comprises 1342 residues: DNA-directed RNA polymerase subunit beta (1342 aa).

The protein belongs to the RNA polymerase beta chain family. As to quaternary structure, the RNAP catalytic core consists of 2 alpha, 1 beta, 1 beta' and 1 omega subunit. When a sigma factor is associated with the core the holoenzyme is formed, which can initiate transcription.

It carries out the reaction RNA(n) + a ribonucleoside 5'-triphosphate = RNA(n+1) + diphosphate. DNA-dependent RNA polymerase catalyzes the transcription of DNA into RNA using the four ribonucleoside triphosphates as substrates. The sequence is that of DNA-directed RNA polymerase subunit beta from Mannheimia succiniciproducens (strain KCTC 0769BP / MBEL55E).